Reading from the N-terminus, the 46-residue chain is Protein PsbN (46 aa).

Residues 10–30 (LIITILAVTIAFTAVSLYTAF) traverse the membrane as a helical segment.

The protein belongs to the PsbN family.

The protein localises to the cellular thylakoid membrane. Its function is as follows. May play a role in photosystem I and II biogenesis. The protein is Protein PsbN of Acaryochloris marina (strain MBIC 11017).